The chain runs to 1004 residues: Zinc finger protein 316 (1004 aa).

Residues 1 to 148 are disordered; it reads MAALHTTPDS…EEEEDEDEDD (148 aa). The residue at position 2 (Ala-2) is an N-acetylalanine. Thr-7 is modified (phosphothreonine). Ser-10 is modified (phosphoserine). The span at 21-60 shows a compositional bias: acidic residues; that stretch reads GSECDPDQEEEEEEEEKGEEVQEVEEEEEEIVVEEEEEGV. Residues 61–72 show a composition bias toward low complexity; that stretch reads AEVVQDAQVEAV. The segment covering 73–95 has biased composition (acidic residues); that stretch reads AEVEVEADVEEEDVKEVLAEEEC. Ser-112 bears the Phosphoserine mark. Residues 132–148 show a composition bias toward acidic residues; it reads EDLEEEEEEEEDEDEDD. The region spanning 158-229 is the KRAB domain; it reads VTFEDVAVYF…DSPRPEEGDI (72 aa). 5 C2H2-type zinc fingers span residues 345 to 367, 373 to 395, 401 to 423, 429 to 451, and 457 to 479; these read TTCDVCGKVFPHRSRLAKHQRYH, FGCEECGKGFVYRSHLAIHQRTH, FPCPDCGKRFVYKSHLVTHRRIH, YRCAFCGAGFGRRSYLVTHQRTH, and YPCSHCGRSFSQSSALARHQAVH. The C2H2-type 6; degenerate zinc finger occupies 485–512; it reads HCCPDCGQAFRLRADFQRHRRGGGCAEA. The segment at 508-574 is disordered; that stretch reads GCAEAGGDGP…TPSGKVDPAP (67 aa). The segment covering 531 to 557 has biased composition (acidic residues); that stretch reads EDTDPGPEGSEVGEADGEAEAAAEERE. C2H2-type zinc fingers lie at residues 691 to 713, 719 to 741, 747 to 769, 775 to 797, and 803 to 825; these read WICSDCGKTFGRRAALAKHQRYH, HRCADCGKSFVYGSHLARHRRTH, FPCPECGARFARGSHLAAHVRGH, FVCGVCGAGFSRRAHLTAHGRAH, and YACGECGRRFGQSAALTRHQWAH. Lys-829 participates in a covalent cross-link: Glycyl lysine isopeptide (Lys-Gly) (interchain with G-Cter in SUMO2). 4 consecutive C2H2-type zinc fingers follow at residues 831–853, 859–881, 887–909, and 915–937; these read HRCPDCGKGFGHSSDFKRHRRTH, FRCADCGRGFAQRSNLAKHRRGH, FPCPECGKRFSQRSVLVTHQRTH, and YACANCGRRFSQSSHLLTHMKTH. The segment at 936 to 976 is disordered; that stretch reads THRGATAAPGSGSAPAPAPKPEAAAKGPSSAGPGERGSALL. Over residues 939–968 the composition is skewed to low complexity; sequence GATAAPGSGSAPAPAPKPEAAAKGPSSAGP. Lys-955 is covalently cross-linked (Glycyl lysine isopeptide (Lys-Gly) (interchain with G-Cter in SUMO2)).

Belongs to the krueppel C2H2-type zinc-finger protein family.

The protein localises to the nucleus. May be involved in transcriptional regulation. This Homo sapiens (Human) protein is Zinc finger protein 316 (ZNF316).